The chain runs to 319 residues: Aspartate carbamoyltransferase catalytic subunit (319 aa).

Carbamoyl phosphate contacts are provided by arginine 55 and threonine 56. An L-aspartate-binding site is contributed by lysine 83. Positions 105, 144, and 147 each coordinate carbamoyl phosphate. L-aspartate-binding residues include arginine 177 and arginine 231. Carbamoyl phosphate contacts are provided by glycine 272 and proline 273.

It belongs to the aspartate/ornithine carbamoyltransferase superfamily. ATCase family. Heterododecamer (2C3:3R2) of six catalytic PyrB chains organized as two trimers (C3), and six regulatory PyrI chains organized as three dimers (R2).

The enzyme catalyses carbamoyl phosphate + L-aspartate = N-carbamoyl-L-aspartate + phosphate + H(+). It functions in the pathway pyrimidine metabolism; UMP biosynthesis via de novo pathway; (S)-dihydroorotate from bicarbonate: step 2/3. Its function is as follows. Catalyzes the condensation of carbamoyl phosphate and aspartate to form carbamoyl aspartate and inorganic phosphate, the committed step in the de novo pyrimidine nucleotide biosynthesis pathway. The protein is Aspartate carbamoyltransferase catalytic subunit of Nocardia farcinica (strain IFM 10152).